The following is a 1671-amino-acid chain: DENN domain-containing protein Crag (1671 aa).

In terms of domain architecture, MABP spans 39 to 195 (IEPITDIGVY…DVYLCYKKSM (157 aa)). The region spanning 187–364 (VYLCYKKSMY…DEVPFPAPSI (178 aa)) is the uDENN domain. In terms of domain architecture, cDENN spans 385-521 (PLPRSGAGFH…AARLLRQTLT (137 aa)). Positions 523 to 632 (LENAKPISYD…ERSFVSDGDH (110 aa)) constitute a dDENN domain. Disordered regions lie at residues 997–1160 (QQQQ…PVAS), 1245–1311 (ANST…RLSE), and 1415–1435 (VEESEQSDPLQDGKEQIANGN). Composition is skewed to acidic residues over residues 1011 to 1023 (GDDDDEDEDEDEY) and 1050 to 1061 (YEADEEDEDEVD). Polar residues predominate over residues 1072–1089 (RVQSPTKISPRTPVTQND). Residues 1100–1119 (AASATPTQETQQEQQHSQSQ) show a composition bias toward low complexity. Positions 1136 to 1147 (RSATFDESTQIG) are enriched in polar residues. The span at 1254-1277 (NGHHPHGLHHGHHHPHHHHHHHSQ) shows a compositional bias: basic residues. Residues 1281 to 1301 (AEQEEHDAAVHEEGKLRRVSS) show a composition bias toward basic and acidic residues.

Interacts with Cam. Interacts with Rab10. Interacts (via the DENN domains) with Rab11. As to expression, expressed in the adult head and body.

Its subcellular location is the cytoplasm. The protein resides in the cell cortex. It localises to the early endosome. The protein localises to the recycling endosome. It is found in the cytoplasmic granule. In terms of biological role, calmodulin-binding protein that acts as a guanine exchange factor for Rab10 and Rab11. Essential for maintenance of adult photoreceptor cells. Upon light stimulation, required for trafficking of newly synthesized ninaE (Rh1) from the trans-Golgi network to rhabdomere membranes via Rab11-dependent vesicular transport. During egg development, essential for establishing and maintaining epithelial cell polarity by regulating the correct polarized deposition of basal membrane (BM) proteins in follicular epithelial (FE) cells. Functions by targeting Rab10 to the basal cytoplasm, where it restricts the secretion of BM proteins such as trol/Pcan and vkg/Coll IV to the basal surface. Appears to be involved in regulating the levels and distribution of the guanine nucleotide exchange factor strat, however the two proteins appear to have independent roles in regulating polarized BM protein secretion in the FE. In Drosophila melanogaster (Fruit fly), this protein is DENN domain-containing protein Crag.